A 209-amino-acid polypeptide reads, in one-letter code: Protein-L-isoaspartate O-methyltransferase (209 aa).

Serine 59 is an active-site residue.

It belongs to the methyltransferase superfamily. L-isoaspartyl/D-aspartyl protein methyltransferase family.

It localises to the cytoplasm. It carries out the reaction [protein]-L-isoaspartate + S-adenosyl-L-methionine = [protein]-L-isoaspartate alpha-methyl ester + S-adenosyl-L-homocysteine. Functionally, catalyzes the methyl esterification of L-isoaspartyl residues in peptides and proteins that result from spontaneous decomposition of normal L-aspartyl and L-asparaginyl residues. It plays a role in the repair and/or degradation of damaged proteins. The sequence is that of Protein-L-isoaspartate O-methyltransferase from Helicobacter pylori (strain G27).